The chain runs to 1610 residues: Adenylate cyclase type 10 (1610 aa).

Guanylate cyclase domains lie at Val-42 to Gln-179 and Thr-293 to Met-418. Residues Asp-47 and Ile-48 each contribute to the Mg(2+) site. ATP is bound at residue Asp-47–Thr-52. Lys-95 contributes to the hydrogencarbonate binding site. Residue Asp-99 coordinates Mg(2+). ATP is bound by residues Asp-99 and Lys-144. Positions 167, 176, and 337 each coordinate hydrogencarbonate. Residues Val-406 and Asn-412–Arg-416 contribute to the ATP site.

Belongs to the adenylyl cyclase class-4/guanylyl cyclase family. Mg(2+) is required as a cofactor. Requires Mn(2+) as cofactor. Cleavage may occur to generate the active 48 kDa form. In terms of tissue distribution, detected in airway epithelial cells and testis (at protein level). Weakly expressed in multiple tissues. Expressed in brain, heart, kidney, liver, lung, pancreas, peripheral blood leukocytes, placenta, skeletal muscle, stomach, thymus, airway epithelial cells, duodenum, jejunum and ileum. Very low level of expression in bone.

The protein localises to the cell membrane. The protein resides in the cytoplasm. Its subcellular location is the cytoskeleton. It is found in the perinuclear region. It localises to the nucleus. The protein localises to the cell projection. The protein resides in the cilium. Its subcellular location is the mitochondrion. It catalyses the reaction ATP = 3',5'-cyclic AMP + diphosphate. Its activity is regulated as follows. Activated by manganese or magnesium ions. In the presence of magnesium ions, the enzyme is activated by bicarbonate. In the presence of manganese ions, the enzyme is inhibited by bicarbonate. In the absence of magnesium and bicarbonate, the enzyme is weakly activated by calcium. Calcium mildly increases the enzyme activity, also in the presence of magnesium ions. In terms of biological role, catalyzes the formation of the signaling molecule cAMP. May function as sensor that mediates responses to changes in cellular bicarbonate and CO(2) levels. Has a critical role in mammalian spermatogenesis by producing the cAMP which regulates cAMP-responsive nuclear factors indispensable for sperm maturation in the epididymis. Induces capacitation, the maturational process that sperm undergo prior to fertilization. Involved in ciliary beat regulation. This is Adenylate cyclase type 10 (ADCY10) from Homo sapiens (Human).